We begin with the raw amino-acid sequence, 230 residues long: LexA repressor (230 aa).

The H-T-H motif DNA-binding region spans 28–48; that stretch reads LREIGAHMGIRSTNGVNDHLR. Catalysis depends on for autocatalytic cleavage activity residues S149 and K186.

It belongs to the peptidase S24 family. Homodimer.

The enzyme catalyses Hydrolysis of Ala-|-Gly bond in repressor LexA.. In terms of biological role, represses a number of genes involved in the response to DNA damage (SOS response), including recA and lexA. In the presence of single-stranded DNA, RecA interacts with LexA causing an autocatalytic cleavage which disrupts the DNA-binding part of LexA, leading to derepression of the SOS regulon and eventually DNA repair. The chain is LexA repressor from Sorangium cellulosum (strain So ce56) (Polyangium cellulosum (strain So ce56)).